A 208-amino-acid chain; its full sequence is Large ribosomal subunit protein eL13 (208 aa).

Residues S177 and S180 each carry the phosphoserine modification.

Belongs to the eukaryotic ribosomal protein eL13 family. As to quaternary structure, component of the large ribosomal subunit (LSU). Mature yeast ribosomes consist of a small (40S) and a large (60S) subunit. The 40S small subunit contains 1 molecule of ribosomal RNA (18S rRNA) and at least 33 different proteins. The large 60S subunit contains 3 rRNA molecules (25S, 5.8S and 5S rRNA) and at least 46 different proteins.

It is found in the cytoplasm. Its function is as follows. Component of the ribosome, a large ribonucleoprotein complex responsible for the synthesis of proteins in the cell. The small ribosomal subunit (SSU) binds messenger RNAs (mRNAs) and translates the encoded message by selecting cognate aminoacyl-transfer RNA (tRNA) molecules. The large subunit (LSU) contains the ribosomal catalytic site termed the peptidyl transferase center (PTC), which catalyzes the formation of peptide bonds, thereby polymerizing the amino acids delivered by tRNAs into a polypeptide chain. The nascent polypeptides leave the ribosome through a tunnel in the LSU and interact with protein factors that function in enzymatic processing, targeting, and the membrane insertion of nascent chains at the exit of the ribosomal tunnel. This Schizosaccharomyces pombe (strain 972 / ATCC 24843) (Fission yeast) protein is Large ribosomal subunit protein eL13 (rpl13).